We begin with the raw amino-acid sequence, 376 residues long: Riboflavin biosynthesis protein RibD (376 aa).

A deaminase region spans residues 1–150; sequence MEDFSEQQLF…QPYLYQRTHN (150 aa). The CMP/dCMP-type deaminase domain occupies 6–128; that stretch reads EQQLFFMRRA…MLRQAGIQVY (123 aa). His-55 lines the Zn(2+) pocket. Glu-57 acts as the Proton donor in catalysis. Residues Cys-80 and Cys-89 each coordinate Zn(2+). The tract at residues 151–376 is reductase; that stretch reads FPWTILKSAA…SPQVFEPIRN (226 aa). Position 159 (Ala-159) interacts with NADP(+). Residue Ser-173 participates in substrate binding. Residue Trp-175 coordinates NADP(+). Arg-189 serves as a coordination point for substrate. 2 residues coordinate NADP(+): Thr-201 and Asp-205. Positions 209 and 212 each coordinate substrate. Ser-230 contributes to the NADP(+) binding site. Glu-300 contacts substrate. NADP(+) is bound at residue 302–308; the sequence is GTTLHTS.

The protein in the N-terminal section; belongs to the cytidine and deoxycytidylate deaminase family. In the C-terminal section; belongs to the HTP reductase family. The cofactor is Zn(2+).

The catalysed reaction is 2,5-diamino-6-hydroxy-4-(5-phosphoribosylamino)-pyrimidine + H2O + H(+) = 5-amino-6-(5-phospho-D-ribosylamino)uracil + NH4(+). The enzyme catalyses 5-amino-6-(5-phospho-D-ribitylamino)uracil + NADP(+) = 5-amino-6-(5-phospho-D-ribosylamino)uracil + NADPH + H(+). It functions in the pathway cofactor biosynthesis; riboflavin biosynthesis; 5-amino-6-(D-ribitylamino)uracil from GTP: step 2/4. Its pathway is cofactor biosynthesis; riboflavin biosynthesis; 5-amino-6-(D-ribitylamino)uracil from GTP: step 3/4. Its function is as follows. Converts 2,5-diamino-6-(ribosylamino)-4(3h)-pyrimidinone 5'-phosphate into 5-amino-6-(ribosylamino)-2,4(1h,3h)-pyrimidinedione 5'-phosphate. This Chlamydia pneumoniae (Chlamydophila pneumoniae) protein is Riboflavin biosynthesis protein RibD (ribD).